Consider the following 399-residue polypeptide: Long-chain primary alcohol dehydrogenase AdhA (399 aa).

Belongs to the iron-containing alcohol dehydrogenase family. In terms of assembly, homotetramer. It depends on Zn(2+) as a cofactor.

The catalysed reaction is a primary alcohol + NADP(+) = an aldehyde + NADPH + H(+). Its function is as follows. Alcohol dehydrogenase active against primary long-chain alcohols. Pentan-1-ol is the optimum substrate in vitro, but also shows efficient dehydrogenase activity on propanol, hexanol, and ethanol. This chain is Long-chain primary alcohol dehydrogenase AdhA (adhA), found in Thermoanaerobacter ethanolicus (Clostridium thermohydrosulfuricum).